Reading from the N-terminus, the 149-residue chain is Transcriptional repressor NrdR (149 aa).

Residues 3–34 (CPFCSAVDTKVIDSRLVGDGSQVRRRRQCLVC) fold into a zinc finger. The ATP-cone domain maps to 49–139 (PRVVKSNGVR…VYRSFEDVRE (91 aa)).

This sequence belongs to the NrdR family. Zn(2+) is required as a cofactor.

In terms of biological role, negatively regulates transcription of bacterial ribonucleotide reductase nrd genes and operons by binding to NrdR-boxes. This is Transcriptional repressor NrdR from Edwardsiella ictaluri (strain 93-146).